A 238-amino-acid chain; its full sequence is MIAFIVLLSLAAVLQQSSGTVDFASESSNKKDYRKEIVDKHNALRRSVKPTARNMLRMEWNSRAAQNAKRWADRCTFAHSPPHTRTVGKLRCGENIFMSTQPFAWSGVVQAWYDEVKKFVYGIGAKPPGSVIGHYTQVVWYKSHLLGCASAKCSSTKYLYVCQYCPAGNIRGSIATPYKSGPACGDCPSACVNGLCTNPCKYEDAFTNCKALAKKTKCKTEWIKSKCPATCFCHNKII.

An N-terminal signal peptide occupies residues 1–19 (MIAFIVLLSLAAVLQQSSG). An SCP domain is found at 38-164 (VDKHNALRRS…STKYLYVCQY (127 aa)). 8 cysteine pairs are disulfide-bonded: cysteine 75-cysteine 153, cysteine 92-cysteine 165, cysteine 148-cysteine 162, cysteine 184-cysteine 191, cysteine 187-cysteine 196, cysteine 200-cysteine 233, cysteine 209-cysteine 227, and cysteine 218-cysteine 231. Positions 200–233 (CKYEDAFTNCKALAKKTKCKTEWIKSKCPATCFC) constitute a ShKT domain.

The protein belongs to the CRISP family. As to expression, expressed by the venom gland.

The protein localises to the secreted. In terms of biological role, blocks contraction of smooth muscle elicited by high potassium-induced depolarization, but does not block caffeine-stimulated contraction. May target voltage-gated calcium channels on smooth muscle. The protein is Cysteine-rich venom protein of Austrelaps superbus (Lowland copperhead snake).